We begin with the raw amino-acid sequence, 214 residues long: Thiamine-phosphate synthase (214 aa).

4-amino-2-methyl-5-(diphosphooxymethyl)pyrimidine-binding positions include 38–42 and asparagine 70; that span reads QLREK. Positions 71 and 90 each coordinate Mg(2+). The 4-amino-2-methyl-5-(diphosphooxymethyl)pyrimidine site is built by serine 109 and lysine 138. Glycine 165 contacts 2-[(2R,5Z)-2-carboxy-4-methylthiazol-5(2H)-ylidene]ethyl phosphate.

It belongs to the thiamine-phosphate synthase family. Requires Mg(2+) as cofactor.

It catalyses the reaction 2-[(2R,5Z)-2-carboxy-4-methylthiazol-5(2H)-ylidene]ethyl phosphate + 4-amino-2-methyl-5-(diphosphooxymethyl)pyrimidine + 2 H(+) = thiamine phosphate + CO2 + diphosphate. It carries out the reaction 2-(2-carboxy-4-methylthiazol-5-yl)ethyl phosphate + 4-amino-2-methyl-5-(diphosphooxymethyl)pyrimidine + 2 H(+) = thiamine phosphate + CO2 + diphosphate. The catalysed reaction is 4-methyl-5-(2-phosphooxyethyl)-thiazole + 4-amino-2-methyl-5-(diphosphooxymethyl)pyrimidine + H(+) = thiamine phosphate + diphosphate. It participates in cofactor biosynthesis; thiamine diphosphate biosynthesis; thiamine phosphate from 4-amino-2-methyl-5-diphosphomethylpyrimidine and 4-methyl-5-(2-phosphoethyl)-thiazole: step 1/1. Functionally, condenses 4-methyl-5-(beta-hydroxyethyl)thiazole monophosphate (THZ-P) and 2-methyl-4-amino-5-hydroxymethyl pyrimidine pyrophosphate (HMP-PP) to form thiamine monophosphate (TMP). This Caldanaerobacter subterraneus subsp. tengcongensis (strain DSM 15242 / JCM 11007 / NBRC 100824 / MB4) (Thermoanaerobacter tengcongensis) protein is Thiamine-phosphate synthase.